Reading from the N-terminus, the 361-residue chain is Phospho-N-acetylmuramoyl-pentapeptide-transferase (361 aa).

Helical transmembrane passes span 28–48 (LAII…IKFL), 74–94 (TMGG…LADL), 99–119 (TWIT…DDYA), 133–153 (SKLL…EYLD), 168–188 (LSLD…VGSS), 203–223 (VPIA…GNLI), 236–256 (TGEL…FLWF), 263–283 (VFMG…ISVI), 288–308 (IVLA…ILQV), and 338–358 (KVVI…LSSL).

This sequence belongs to the glycosyltransferase 4 family. MraY subfamily. Requires Mg(2+) as cofactor.

Its subcellular location is the cell inner membrane. The catalysed reaction is UDP-N-acetyl-alpha-D-muramoyl-L-alanyl-gamma-D-glutamyl-meso-2,6-diaminopimeloyl-D-alanyl-D-alanine + di-trans,octa-cis-undecaprenyl phosphate = di-trans,octa-cis-undecaprenyl diphospho-N-acetyl-alpha-D-muramoyl-L-alanyl-D-glutamyl-meso-2,6-diaminopimeloyl-D-alanyl-D-alanine + UMP. Its pathway is cell wall biogenesis; peptidoglycan biosynthesis. Catalyzes the initial step of the lipid cycle reactions in the biosynthesis of the cell wall peptidoglycan: transfers peptidoglycan precursor phospho-MurNAc-pentapeptide from UDP-MurNAc-pentapeptide onto the lipid carrier undecaprenyl phosphate, yielding undecaprenyl-pyrophosphoryl-MurNAc-pentapeptide, known as lipid I. The chain is Phospho-N-acetylmuramoyl-pentapeptide-transferase from Rickettsia massiliae (strain Mtu5).